The following is a 901-amino-acid chain: Protein translocase subunit SecA (901 aa).

Residues Q87, 105 to 109 (GEGKT), and D512 each bind ATP. Positions 859–901 (HQDDDSAAAAALAAQTGERKVGRNDPCPCGSGKKYKQCHGRLQ) are disordered. Zn(2+) contacts are provided by C885, C887, C896, and H897. Basic residues predominate over residues 891–901 (KKYKQCHGRLQ).

It belongs to the SecA family. As to quaternary structure, monomer and homodimer. Part of the essential Sec protein translocation apparatus which comprises SecA, SecYEG and auxiliary proteins SecDF-YajC and YidC. The cofactor is Zn(2+).

The protein localises to the cell inner membrane. It localises to the cytoplasm. The catalysed reaction is ATP + H2O + cellular proteinSide 1 = ADP + phosphate + cellular proteinSide 2.. In terms of biological role, part of the Sec protein translocase complex. Interacts with the SecYEG preprotein conducting channel. Has a central role in coupling the hydrolysis of ATP to the transfer of proteins into and across the cell membrane, serving both as a receptor for the preprotein-SecB complex and as an ATP-driven molecular motor driving the stepwise translocation of polypeptide chains across the membrane. This is Protein translocase subunit SecA from Escherichia coli O9:H4 (strain HS).